Consider the following 73-residue polypeptide: Cell division protein ZapB (73 aa).

Residues 3–66 adopt a coiled-coil conformation; the sequence is LELLSKLETK…SWNEKVTGLV (64 aa).

The protein belongs to the ZapB family. Homodimer. The ends of the coiled-coil dimer bind to each other, forming polymers. Interacts with FtsZ.

Its subcellular location is the cytoplasm. Non-essential, abundant cell division factor that is required for proper Z-ring formation. It is recruited early to the divisome by direct interaction with FtsZ, stimulating Z-ring assembly and thereby promoting cell division earlier in the cell cycle. Its recruitment to the Z-ring requires functional FtsA or ZipA. This chain is Cell division protein ZapB, found in Shewanella baltica (strain OS223).